The sequence spans 200 residues: Serotonin N-acetyltransferase 2, chloroplastic (200 aa).

The transit peptide at 1 to 41 (MQMQAARPRVGVRPRGGIRPFPLPTLSFNNNSNRSACACAC) directs the protein to the chloroplast. In terms of domain architecture, N-acetyltransferase spans 55-195 (FAVRRSSTGL…MAFYRSRQQI (141 aa)).

The protein localises to the cytoplasm. The protein resides in the plastid. Its subcellular location is the chloroplast. The enzyme catalyses serotonin + acetyl-CoA = N-acetylserotonin + CoA + H(+). It catalyses the reaction tyramine + acetyl-CoA = N-acetyltyramine + CoA + H(+). The catalysed reaction is tryptamine + acetyl-CoA = N-acetyltryptamine + CoA + H(+). It carries out the reaction 5-methoxytryptamine + acetyl-CoA = melatonin + CoA + H(+). It functions in the pathway aromatic compound metabolism; melatonin biosynthesis; melatonin from serotonin: step 1/2. Its function is as follows. Catalyzes the N-acetylation of serotonin into N-acetylserotonin, the penultimate step in the synthesis of melatonin. Catalyzes in vitro the N-acetylation of tryptamine to produce N-acetyltryptamine, 5-methoxytryptamine to produce melatonin and tyramine to produce N-acetyltyramine. This chain is Serotonin N-acetyltransferase 2, chloroplastic, found in Oryza sativa subsp. japonica (Rice).